The sequence spans 274 residues: S-methyl-5'-thioadenosine phosphorylase (274 aa).

Phosphate-binding positions include serine 20, 62 to 63, and 95 to 96; these read RH and SA. Methionine 194 provides a ligand contact to substrate. Threonine 195 contributes to the phosphate binding site. Position 218-220 (218-220) interacts with substrate; sequence DYD.

It belongs to the PNP/MTAP phosphorylase family. MTAP subfamily. In terms of assembly, homohexamer. Dimer of a homotrimer.

The enzyme catalyses S-methyl-5'-thioadenosine + phosphate = 5-(methylsulfanyl)-alpha-D-ribose 1-phosphate + adenine. Its pathway is amino-acid biosynthesis; L-methionine biosynthesis via salvage pathway; S-methyl-5-thio-alpha-D-ribose 1-phosphate from S-methyl-5'-thioadenosine (phosphorylase route): step 1/1. Catalyzes the reversible phosphorylation of S-methyl-5'-thioadenosine (MTA) to adenine and 5-methylthioribose-1-phosphate. Involved in the breakdown of MTA, a major by-product of polyamine biosynthesis. Responsible for the first step in the methionine salvage pathway after MTA has been generated from S-adenosylmethionine. Has broad substrate specificity with 6-aminopurine nucleosides as preferred substrates. In Hyperthermus butylicus (strain DSM 5456 / JCM 9403 / PLM1-5), this protein is S-methyl-5'-thioadenosine phosphorylase.